A 435-amino-acid chain; its full sequence is Cell adhesion molecule 2 (435 aa).

A signal peptide spans 1–24 (MIWKRSAVLRFYSVCGLLLLGSQG). Topologically, residues 25 to 367 (QFPLTQNVTV…SLAGQNGPDH (343 aa)) are extracellular. Positions 27-119 (PLTQNVTVVE…PVKTSKAYLT (93 aa)) constitute an Ig-like V-type domain. Asparagine 31 and asparagine 51 each carry an N-linked (GlcNAc...) asparagine glycan. Intrachain disulfides connect cysteine 44-cysteine 104, cysteine 146-cysteine 203, and cysteine 248-cysteine 296. 2 Ig-like C2-type domains span residues 127–219 (PQIS…VAMQ) and 227–312 (PSVK…YVLI). Asparagine 291 carries an N-linked (GlcNAc...) asparagine glycan. Positions 341-351 (TTSPSTSASSS) are enriched in low complexity. The tract at residues 341 to 360 (TTSPSTSASSSSRRDPNSLA) is disordered. The helical transmembrane segment at 368–388 (ALIGGIVAVVVFVTLCSIFLL) threads the bilayer. Residues 389–435 (GRYLARHKGTYLTNEAKGAEDAPDADTAIINAEGSQVNAEEKKEYFI) lie on the Cytoplasmic side of the membrane. Serine 423 carries the phosphoserine modification.

This sequence belongs to the nectin family. In terms of processing, glycosylation at Asn-51 reduces adhesive binding.

It localises to the cell membrane. The protein resides in the synapse. The protein localises to the cell projection. Its subcellular location is the axon. In terms of biological role, adhesion molecule that engages in homo- and heterophilic interactions with the other nectin-like family members, leading to cell aggregation. Important for synapse organization, providing regulated trans-synaptic adhesion. Preferentially binds to oligodendrocytes. The polypeptide is Cell adhesion molecule 2 (Cadm2) (Rattus norvegicus (Rat)).